The chain runs to 1099 residues: Carbamoyl phosphate synthase large chain (1099 aa).

The interval 1 to 402 (MPKREDIKRI…ALGKALRSLE (402 aa)) is carboxyphosphate synthetic domain. 12 residues coordinate ATP: arginine 129, arginine 169, glycine 175, glycine 176, glutamate 208, valine 210, glutamate 215, glycine 241, isoleucine 242, histidine 243, glutamine 285, and glutamate 299. The region spanning 133–328 (KETMEKAGLE…IAKVAALLAV (196 aa)) is the ATP-grasp 1 domain. Residues glutamine 285, glutamate 299, and asparagine 301 each contribute to the Mg(2+) site. Positions 285, 299, and 301 each coordinate Mn(2+). Positions 403–541 (LDAAPKLDLE…STYNGVENEA (139 aa)) are oligomerization domain. Residues 542–944 (VPSDREKIMI…AFAKAQIAAG (403 aa)) are carbamoyl phosphate synthetic domain. Residues 666–857 (AKLLKQIGLK…VARIAAKIMV (192 aa)) enclose the ATP-grasp 2 domain. The ATP site is built by arginine 702, lysine 741, leucine 743, glutamate 748, glycine 773, valine 774, histidine 775, serine 776, glutamine 816, and glutamate 828. Mg(2+)-binding residues include glutamine 816, glutamate 828, and asparagine 830. 3 residues coordinate Mn(2+): glutamine 816, glutamate 828, and asparagine 830. In terms of domain architecture, MGS-like spans 945 to 1099 (NPLPTTGAIL…VRRLTDTWKM (155 aa)). The interval 945 to 1099 (NPLPTTGAIL…VRRLTDTWKM (155 aa)) is allosteric domain.

It belongs to the CarB family. As to quaternary structure, composed of two chains; the small (or glutamine) chain promotes the hydrolysis of glutamine to ammonia, which is used by the large (or ammonia) chain to synthesize carbamoyl phosphate. Tetramer of heterodimers (alpha,beta)4. It depends on Mg(2+) as a cofactor. Mn(2+) is required as a cofactor.

It catalyses the reaction hydrogencarbonate + L-glutamine + 2 ATP + H2O = carbamoyl phosphate + L-glutamate + 2 ADP + phosphate + 2 H(+). The enzyme catalyses hydrogencarbonate + NH4(+) + 2 ATP = carbamoyl phosphate + 2 ADP + phosphate + 2 H(+). It participates in amino-acid biosynthesis; L-arginine biosynthesis; carbamoyl phosphate from bicarbonate: step 1/1. Its pathway is pyrimidine metabolism; UMP biosynthesis via de novo pathway; (S)-dihydroorotate from bicarbonate: step 1/3. Its function is as follows. Large subunit of the glutamine-dependent carbamoyl phosphate synthetase (CPSase). CPSase catalyzes the formation of carbamoyl phosphate from the ammonia moiety of glutamine, carbonate, and phosphate donated by ATP, constituting the first step of 2 biosynthetic pathways, one leading to arginine and/or urea and the other to pyrimidine nucleotides. The large subunit (synthetase) binds the substrates ammonia (free or transferred from glutamine from the small subunit), hydrogencarbonate and ATP and carries out an ATP-coupled ligase reaction, activating hydrogencarbonate by forming carboxy phosphate which reacts with ammonia to form carbamoyl phosphate. The sequence is that of Carbamoyl phosphate synthase large chain from Thermotoga maritima (strain ATCC 43589 / DSM 3109 / JCM 10099 / NBRC 100826 / MSB8).